The chain runs to 332 residues: CMRF35-like molecule 1 (332 aa).

The signal sequence occupies residues 1 to 18 (MHLSLLALFLFWISGCFT). Residues 19–181 (AQDPVTGPEE…GDGNGFLDLS (163 aa)) lie on the Extracellular side of the membrane. Positions 22 to 125 (PVTGPEEVSG…YDHMFKVHVS (104 aa)) constitute an Ig-like V-type domain. 2 disulfide bridges follow: Cys41–Cys109 and Cys55–Cys63. An N-linked (GlcNAc...) asparagine glycan is attached at Asn89. Residues 182 to 202 (VLLPVISAALLLLLLVVSLIA) traverse the membrane as a helical segment. Residues 203-332 (WRMVRRQKKA…EYSSIRRPMP (130 aa)) are Cytoplasmic-facing. Disordered regions lie at residues 251–270 (PRTSPLKKGSSMSSSGKDHQ) and 313–332 (PRTNLGEETTEYSSIRRPMP).

The protein belongs to the CD300 family. As to quaternary structure, interacts with PTPN6/SHP-1 in a tyrosine phosphorylation dependent manner. Interacts with IL4R. Post-translationally, phosphorylated on tyrosine.

Its subcellular location is the cell membrane. Its function is as follows. Acts as an inhibitory receptor for myeloid cells and mast cells. Positively regulates the phagocytosis of apoptotic cells (efferocytosis) via phosphatidylserine (PS) recognition; recognizes and binds PS as a ligand which is expressed on the surface of apoptotic cells. Plays an important role in the maintenance of immune homeostasis, by promoting macrophage-mediated efferocytosis and by inhibiting dendritic cell-mediated efferocytosis. Negatively regulates Fc epsilon receptor-dependent mast cell activation and allergic responses via binding to ceramide and sphingomyelin which act as ligands. May act as a coreceptor for interleukin 4 (IL-4). Associates with and regulates IL-4 receptor alpha-mediated responses by augmenting IL-4- and IL-13-induced signaling. Negatively regulates the Toll-like receptor (TLR) signaling mediated by MYD88 and TRIF through activation of PTPN6/SHP-1 and PTPN11/SHP-2. Inhibits osteoclast formation. Induces macrophage cell death upon engagement. The protein is CMRF35-like molecule 1 (Cd300lf) of Rattus norvegicus (Rat).